Here is a 127-residue protein sequence, read N- to C-terminus: NADPH-dependent 7-cyano-7-deazaguanine reductase (127 aa).

Catalysis depends on Cys-40, which acts as the Thioimide intermediate. Asp-47 acts as the Proton donor in catalysis. Substrate contacts are provided by residues 62–64 (VEL) and 81–82 (HE).

The protein belongs to the GTP cyclohydrolase I family. QueF type 1 subfamily.

The protein resides in the cytoplasm. The enzyme catalyses 7-aminomethyl-7-carbaguanine + 2 NADP(+) = 7-cyano-7-deazaguanine + 2 NADPH + 3 H(+). It participates in tRNA modification; tRNA-queuosine biosynthesis. Its function is as follows. Catalyzes the NADPH-dependent reduction of 7-cyano-7-deazaguanine (preQ0) to 7-aminomethyl-7-deazaguanine (preQ1). The sequence is that of NADPH-dependent 7-cyano-7-deazaguanine reductase from Campylobacter jejuni subsp. jejuni serotype O:6 (strain 81116 / NCTC 11828).